A 128-amino-acid chain; its full sequence is Cystatin-1 (128 aa).

A signal peptide spans 1–17; the sequence is MIRSAVVLTVLVGVCLA. The 109-residue stretch at 20-128 folds into the Cystatin domain; sequence GFVGGWSQVD…TKEVTSFECN (109 aa). 2 disulfide bridges follow: C84–C96 and C107–C127.

This sequence belongs to the cystatin family. Mainly expressed in gut.

The protein localises to the secreted. Functionally, inhibitor of cysteine proteinases. Strongly inhibits mammalian cathepsin B and H, and moderately inhibits mammalian cathepsin C. Also inhibits endogenous cathepsin B-like but not cathepsin C-like proteinases. May have a protective role against undesired digestion of a stored blood meal by endogenous peptidases. This is Cystatin-1 from Ornithodoros moubata (Soft tick).